A 363-amino-acid chain; its full sequence is Glutamate 5-kinase (363 aa).

Lysine 3 is an ATP binding site. 3 residues coordinate substrate: serine 43, aspartate 128, and asparagine 140. ATP-binding positions include 160–161 and 202–208; these read TD and TGGMRTK. The 83-residue stretch at 267–349 folds into the PUA domain; that stretch reads AGAILIDDGA…REIENVLGYS (83 aa).

The protein belongs to the glutamate 5-kinase family.

The protein resides in the cytoplasm. It carries out the reaction L-glutamate + ATP = L-glutamyl 5-phosphate + ADP. Its pathway is amino-acid biosynthesis; L-proline biosynthesis; L-glutamate 5-semialdehyde from L-glutamate: step 1/2. Functionally, catalyzes the transfer of a phosphate group to glutamate to form L-glutamate 5-phosphate. The sequence is that of Glutamate 5-kinase from Xanthomonas axonopodis pv. citri (strain 306).